The primary structure comprises 2368 residues: Highly reducing polyketide synthase cla2 (2368 aa).

Residues 10–434 form the Ketosynthase family 3 (KS3) domain; it reads QIPIAIVGLG…GTNGLVVLEA (425 aa). Residues Cys182, His317, and His357 each act as for beta-ketoacyl synthase activity in the active site. Positions 548 to 877 are malonyl-CoA:ACP transacylase (MAT) domain; sequence FVFTGQGAQW…RGQNALDTSL (330 aa). The active-site For malonyltransferase activity is the Ser638. Residues 936–1071 form an N-terminal hotdog fold region; that stretch reads HSMIGLKQPM…GLVAIEYTNK (136 aa). A dehydratase (DH) domain region spans residues 936-1175; that stretch reads HSMIGLKQPM…AIFQSIFGST (240 aa). The PKS/mFAS DH domain maps to 936-1255; that stretch reads HSMIGLKQPM…MTEPEVGDDA (320 aa). Residue His968 is the Proton acceptor; for dehydratase activity of the active site. Residues 1099–1255 are C-terminal hotdog fold; the sequence is PLMIRREKFY…MTEPEVGDDA (157 aa). Residue Asp1165 is the Proton donor; for dehydratase activity of the active site. Residues 1655 to 1967 are enoylreductase (ER) domain; the sequence is GFLDSLQFIK…QGKHRGKLVL (313 aa). Positions 1991-2170 are catalytic ketoreductase (KRc) domain; sequence ATYLIIGGLG…AVAVNLTIIR (180 aa). Residues 2283-2360 form the Carrier domain; the sequence is QASEIITEGL…VLAKTIASRS (78 aa). Position 2320 is an O-(pantetheine 4'-phosphoryl)serine (Ser2320).

The protein operates within secondary metabolite biosynthesis. Highly reducing polyketide synthase; part of the gene cluster that mediates the biosynthesis of cladosporin, a tricyclic octaketide that acts as an antimalarial agent though inhibition of the Plasmodium falciparum lysyl-tRNA synthetase. The highly reducing polyketide synthase cla2 is responsible for biosynthesis up to the pentaketide stage, including of the tetrahydropyran (THP) ring, whereas the three subsequent ketide extensions with no reduction are catalyzed by the non-reducing polyketide synthase cla3. This is Highly reducing polyketide synthase cla2 from Cladosporium cladosporioides.